The following is a 361-amino-acid chain: SUN domain-containing protein 3 (361 aa).

The Nuclear portion of the chain corresponds to 1–47; that stretch reads MSGKAKARRAAMFFRGCSEDASGSTSGSTLLSEDENPDTNGVTRSWK. The interval 19-38 is disordered; the sequence is EDASGSTSGSTLLSEDENPD. Over residues 22–31 the composition is skewed to low complexity; the sequence is SGSTSGSTLL. A helical transmembrane segment spans residues 48–69; it reads IILSTMFTLTFLLVGLLSHQWL. The Perinuclear space segment spans residues 70–361; sequence KETEVPQKSR…RVHGTPGKHI (292 aa). Positions 103 to 129 form a coiled coil; it reads KEQLELLKKESQTLENNFHKILLLIEQ. Residues 197–358 form the SUN domain; that stretch reads GASIIEAGTS…YRFRVHGTPG (162 aa).

In terms of assembly, self-associates. Interacts with SYNE1 and SPAG4/SUN4. Proposed to form a spermatogenesis-specific LINC complex with SYNE1 during sperm head formation possibly implicating a SUN domain-based heterotrimer with SPAG4/SUN4 associating with SYNE1.

It localises to the membrane. It is found in the nucleus envelope. The protein localises to the nucleus inner membrane. As a probable component of the LINC (LInker of Nucleoskeleton and Cytoskeleton) complex, involved in the connection between the nuclear lamina and the cytoskeleton. The nucleocytoplasmic interactions established by the LINC complex play an important role in the transmission of mechanical forces across the nuclear envelope and in nuclear movement and positioning. May be involved in nuclear remodeling during sperm head formation in spermatogenesis. A probable SUN3:SYNE1 LINC complex may tether spermatid nuclei to posterior cytoskeletal structures such as the manchette. The sequence is that of SUN domain-containing protein 3 (SUN3) from Macaca fascicularis (Crab-eating macaque).